A 467-amino-acid chain; its full sequence is Ankyrin repeat and SOCS box protein 10 (467 aa).

ANK repeat units lie at residues 115-144 (ELTT…KPDS), 147-176 (GGRT…DPNT), 180-209 (DGKR…QVDG), 214-243 (EEET…CPDV), 247-289 (EGWT…DADA), 293-322 (DKQR…NANA), and 326-361 (GGHT…AVRV). The 56-residue stretch at 412 to 467 (YSSLFALVRQPRSLQHLCRCALRSHLEGCLPHALPRLPLPPRMLRFLQLDFEDLLY) folds into the SOCS box domain.

This sequence belongs to the ankyrin SOCS box (ASB) family.

The protein localises to the nucleus. It localises to the cytoplasm. Its pathway is protein modification; protein ubiquitination. In terms of biological role, may be a substrate-recognition component of a SCF-like ECS (Elongin-Cullin-SOCS-box protein) E3 ubiquitin-protein ligase complex which mediates the ubiquitination and subsequent proteasomal degradation of target proteins. The polypeptide is Ankyrin repeat and SOCS box protein 10 (Asb10) (Mus musculus (Mouse)).